The chain runs to 242 residues: 7-cyano-7-deazaguanine synthase (242 aa).

Residue 14-24 coordinates ATP; that stretch reads FSGGQDSATCL. C202, C217, C220, and C223 together coordinate Zn(2+).

This sequence belongs to the QueC family. The cofactor is Zn(2+).

The catalysed reaction is 7-carboxy-7-deazaguanine + NH4(+) + ATP = 7-cyano-7-deazaguanine + ADP + phosphate + H2O + H(+). Its pathway is purine metabolism; 7-cyano-7-deazaguanine biosynthesis. Catalyzes the ATP-dependent conversion of 7-carboxy-7-deazaguanine (CDG) to 7-cyano-7-deazaguanine (preQ(0)). The chain is 7-cyano-7-deazaguanine synthase from Rhodopseudomonas palustris (strain BisA53).